A 520-amino-acid chain; its full sequence is MAQVSRICNGVQNPSLISNLSKSSQRKSPLSVSLKTQQHPRAYPISSSWGLKKSGMTLIGSELRPLKVMSSVSTAEKASEIVLQPIREISGLIKLPGSKSLSNRILLLAALSEGTTVVDNLLNSDDINYMLDALKRLGLNVETDSENNRAVVEGCGGIFPASIDSKSDIELYLGNAGTAMRPLTAAVTAAGGNASYVLDGVPRMRERPIGDLVVGLKQLGADVECTLGTNCPPVRVNANGGLPGGKVKLSGSISSQYLTALLMSAPLALGDVEIEIVDKLISVPYVEMTLKLMERFGVSVEHSDSWDRFFVKGGQKYKSPGNAYVEGDASSASYFLAGAAITGETVTVEGCGTTSLQGDVKFAEVLEKMGCKVSWTENSVTVTGPPRDAFGMRHLRAIDVNMNKMPDVAMTLAVVALFADGPTTIRDVASWRVKETERMIAICTELRKLGATVEEGSDYCVITPPKKVKTAEIDTYDDHRMAMAFSLAACADVPITINDPGCTRKTFPDYFQVLERITKH.

A chloroplast-targeting transit peptide spans 1-76 (MAQVSRICNG…KVMSSVSTAE (76 aa)). The disordered stretch occupies residues 20–39 (LSKSSQRKSPLSVSLKTQQH). The 3-phosphoshikimate site is built by lysine 99, serine 100, and arginine 104. Lysine 99 contributes to the phosphoenolpyruvate binding site. Residues glycine 177 and arginine 207 each coordinate phosphoenolpyruvate. Residues serine 254, serine 255, glutamine 256, serine 282, aspartate 407, and lysine 434 each coordinate 3-phosphoshikimate. Position 256 (glutamine 256) interacts with phosphoenolpyruvate. Aspartate 407 acts as the Proton acceptor in catalysis. Arginine 438, arginine 480, and lysine 505 together coordinate phosphoenolpyruvate.

This sequence belongs to the EPSP synthase family.

The protein localises to the plastid. Its subcellular location is the chloroplast. The enzyme catalyses 3-phosphoshikimate + phosphoenolpyruvate = 5-O-(1-carboxyvinyl)-3-phosphoshikimate + phosphate. It participates in metabolic intermediate biosynthesis; chorismate biosynthesis; chorismate from D-erythrose 4-phosphate and phosphoenolpyruvate: step 6/7. Its function is as follows. Catalyzes the transfer of the enolpyruvyl moiety of phosphoenolpyruvate (PEP) to the 5-hydroxyl of shikimate-3-phosphate (S3P) to produce enolpyruvyl shikimate-3-phosphate and inorganic phosphate. The protein is 3-phosphoshikimate 1-carboxyvinyltransferase, chloroplastic of Arabidopsis thaliana (Mouse-ear cress).